The primary structure comprises 203 residues: Guanylate kinase (203 aa).

The region spanning 4–183 (GKLFVISAPS…ASTLLKSIIW (180 aa)) is the Guanylate kinase-like domain. 11–18 (APSGAGKT) is a binding site for ATP.

It belongs to the guanylate kinase family.

Its subcellular location is the cytoplasm. The enzyme catalyses GMP + ATP = GDP + ADP. Essential for recycling GMP and indirectly, cGMP. The sequence is that of Guanylate kinase from Desulfotalea psychrophila (strain LSv54 / DSM 12343).